The primary structure comprises 354 residues: 4-hydroxy-2-oxovalerate aldolase 5 (354 aa).

Residues 11-263 (VTVHDMCLRD…ETGCDLFKLM (253 aa)) form the Pyruvate carboxyltransferase domain. 19–20 (RD) contacts substrate. Aspartate 20 contributes to the Mn(2+) binding site. Histidine 23 functions as the Proton acceptor in the catalytic mechanism. 2 residues coordinate substrate: serine 173 and histidine 202. Mn(2+) contacts are provided by histidine 202 and histidine 204. Tyrosine 293 serves as a coordination point for substrate.

It belongs to the 4-hydroxy-2-oxovalerate aldolase family.

The enzyme catalyses (S)-4-hydroxy-2-oxopentanoate = acetaldehyde + pyruvate. The polypeptide is 4-hydroxy-2-oxovalerate aldolase 5 (Dechloromonas aromatica (strain RCB)).